The primary structure comprises 420 residues: Glutamyl-tRNA reductase (420 aa).

Substrate-binding positions include 49–52 (TCNR), Ser-107, 112–114 (EPQ), and Gln-118. Cys-50 functions as the Nucleophile in the catalytic mechanism. 187 to 192 (GAGETI) contributes to the NADP(+) binding site.

This sequence belongs to the glutamyl-tRNA reductase family. Homodimer.

It carries out the reaction (S)-4-amino-5-oxopentanoate + tRNA(Glu) + NADP(+) = L-glutamyl-tRNA(Glu) + NADPH + H(+). Its pathway is porphyrin-containing compound metabolism; protoporphyrin-IX biosynthesis; 5-aminolevulinate from L-glutamyl-tRNA(Glu): step 1/2. Functionally, catalyzes the NADPH-dependent reduction of glutamyl-tRNA(Glu) to glutamate 1-semialdehyde (GSA). This Photobacterium profundum (strain SS9) protein is Glutamyl-tRNA reductase.